A 279-amino-acid chain; its full sequence is Phycobilisome rod-core linker polypeptide CpcG1 (279 aa).

The PBS-linker domain maps to 11 to 189 (TTQNQRVEGY…YWRNRLLEQF (179 aa)).

This sequence belongs to the phycobilisome linker protein family. In terms of assembly, the phycobilisome is a hemidiscoidal structure that is composed of two distinct substructures: a core complex and a number of rods radiating from the core.

It is found in the cellular thylakoid membrane. In terms of biological role, rod-core linker protein required for attachment of phycocyanin to allophycocyanin in cores of phycobilisomes. Linker polypeptides determine the state of aggregation and the location of the disk-shaped phycobiliprotein units within the phycobilisome and modulate their spectroscopic properties in order to mediate a directed and optimal energy transfer. This chain is Phycobilisome rod-core linker polypeptide CpcG1 (cpcG1), found in Mastigocladus laminosus (Fischerella sp.).